A 323-amino-acid polypeptide reads, in one-letter code: Small ribosomal subunit protein uS9m (323 aa).

The tract at residues 298-323 (TRDARKVERKKPGKVKARKSPTWVKR) is disordered. A compositionally biased stretch (basic residues) spans 304–323 (VERKKPGKVKARKSPTWVKR).

The protein belongs to the universal ribosomal protein uS9 family.

It localises to the mitochondrion. The chain is Small ribosomal subunit protein uS9m (MRPS9) from Debaryomyces hansenii (strain ATCC 36239 / CBS 767 / BCRC 21394 / JCM 1990 / NBRC 0083 / IGC 2968) (Yeast).